Reading from the N-terminus, the 547-residue chain is Chaperonin GroEL (547 aa).

ATP-binding positions include threonine 30–proline 33, lysine 51, aspartate 87–threonine 91, glycine 415, and aspartate 496.

Belongs to the chaperonin (HSP60) family. Forms a cylinder of 14 subunits composed of two heptameric rings stacked back-to-back. Interacts with the co-chaperonin GroES.

It localises to the cytoplasm. The enzyme catalyses ATP + H2O + a folded polypeptide = ADP + phosphate + an unfolded polypeptide.. Together with its co-chaperonin GroES, plays an essential role in assisting protein folding. The GroEL-GroES system forms a nano-cage that allows encapsulation of the non-native substrate proteins and provides a physical environment optimized to promote and accelerate protein folding. The sequence is that of Chaperonin GroEL from Actinobacillus pleuropneumoniae (Haemophilus pleuropneumoniae).